Here is a 111-residue protein sequence, read N- to C-terminus: Pyrimidine/purine nucleoside phosphorylase 1 (111 aa).

This sequence belongs to the nucleoside phosphorylase PpnP family.

The catalysed reaction is a purine D-ribonucleoside + phosphate = a purine nucleobase + alpha-D-ribose 1-phosphate. It carries out the reaction adenosine + phosphate = alpha-D-ribose 1-phosphate + adenine. The enzyme catalyses cytidine + phosphate = cytosine + alpha-D-ribose 1-phosphate. It catalyses the reaction guanosine + phosphate = alpha-D-ribose 1-phosphate + guanine. The catalysed reaction is inosine + phosphate = alpha-D-ribose 1-phosphate + hypoxanthine. It carries out the reaction thymidine + phosphate = 2-deoxy-alpha-D-ribose 1-phosphate + thymine. The enzyme catalyses uridine + phosphate = alpha-D-ribose 1-phosphate + uracil. It catalyses the reaction xanthosine + phosphate = alpha-D-ribose 1-phosphate + xanthine. Its function is as follows. Catalyzes the phosphorolysis of diverse nucleosides, yielding D-ribose 1-phosphate and the respective free bases. Can use uridine, adenosine, guanosine, cytidine, thymidine, inosine and xanthosine as substrates. Also catalyzes the reverse reactions. The chain is Pyrimidine/purine nucleoside phosphorylase 1 from Psychrobacter arcticus (strain DSM 17307 / VKM B-2377 / 273-4).